The sequence spans 166 residues: Macrocypin-5a (166 aa).

The tract at residues Asn-20 to Ala-39 is disordered.

The protein belongs to the protease inhibitor I85 family.

Functionally, inhibits papain and cysteine cathepsin endopeptidases, and also inhibits cathepsins B and H, which exhibit both exopeptidase and endopeptidase activities. In Macrolepiota procera (Parasol mushroom), this protein is Macrocypin-5a.